We begin with the raw amino-acid sequence, 57 residues long: Small ribosomal subunit protein bS21 (57 aa).

Belongs to the bacterial ribosomal protein bS21 family.

This is Small ribosomal subunit protein bS21 from Lysinibacillus sphaericus (strain C3-41).